A 389-amino-acid polypeptide reads, in one-letter code: cAMP-dependent protein kinase regulatory subunit (389 aa).

Disordered stretches follow at residues 1-57 and 87-110; these read MSEN…KFAG and SVSA…PPYH. Residues 1 to 128 are dimerization and phosphorylation; that stretch reads MSENTFPGRL…RLKKSISGNF (128 aa). Polar residues predominate over residues 21-31; it reads AANTEKPSTSH. The span at 34–43 shows a compositional bias: basic and acidic residues; the sequence is RVTERDEDKV. Position 87 is a phosphoserine (serine 87). The span at 87–105 shows a compositional bias: polar residues; sequence SVSAESLNPNPTASSNESW. 3',5'-cyclic AMP is bound by residues 129–258, glutamate 207, arginine 216, 261–377, glutamate 327, and arginine 336; these read LFNH…FLEE and LLST…GVEE.

Belongs to the cAMP-dependent kinase regulatory chain family. Tetramer, composed of 2 regulatory (R) and 2 catalytic (C) subunits. In the presence of cAMP it dissociates into 2 active monomeric C subunits and an R dimer.

The sequence is that of cAMP-dependent protein kinase regulatory subunit (pkar) from Blumeria graminis (Powdery mildew).